Consider the following 285-residue polypeptide: 4-diphosphocytidyl-2-C-methyl-D-erythritol kinase (285 aa).

The active site involves lysine 12. Residue 95–105 (PMGGGVGGGSS) participates in ATP binding. Residue aspartate 137 is part of the active site.

It belongs to the GHMP kinase family. IspE subfamily.

The catalysed reaction is 4-CDP-2-C-methyl-D-erythritol + ATP = 4-CDP-2-C-methyl-D-erythritol 2-phosphate + ADP + H(+). The protein operates within isoprenoid biosynthesis; isopentenyl diphosphate biosynthesis via DXP pathway; isopentenyl diphosphate from 1-deoxy-D-xylulose 5-phosphate: step 3/6. In terms of biological role, catalyzes the phosphorylation of the position 2 hydroxy group of 4-diphosphocytidyl-2C-methyl-D-erythritol. The chain is 4-diphosphocytidyl-2-C-methyl-D-erythritol kinase from Actinobacillus pleuropneumoniae serotype 3 (strain JL03).